A 396-amino-acid polypeptide reads, in one-letter code: KiSS-1 receptor (396 aa).

Over 1-43 (MATEATLAPNVTWWAPSNASGCPGCGVNASDDPGSAPRPLDAW) the chain is Extracellular. Asn10, Asn18, and Asn28 each carry an N-linked (GlcNAc...) asparagine glycan. The helical transmembrane segment at 44–66 (LVPLFFATLMLLGLVGNSLVIYV) threads the bilayer. The Cytoplasmic segment spans residues 67-78 (ICRHKHMQTVTN). A helical membrane pass occupies residues 79 to 101 (FYIANLAATDVTFLLCCVPFTAL). At 102–116 (LYPLPAWVLGDFMCK) the chain is on the extracellular side. Cysteines 115 and 191 form a disulfide. A helical transmembrane segment spans residues 117–138 (FVNYIQQVSVQATCATLTAMSV). The Cytoplasmic segment spans residues 139–157 (DRWYVTVFPLRALHRRTPR). The helical transmembrane segment at 158–180 (LALAVSLSIWVGSAAVSAPVLAL) threads the bilayer. At 181–203 (HRLSPGPRTYCSEAFPSRALERA) the chain is on the extracellular side. A helical membrane pass occupies residues 204-224 (FALYNLLALYLLPLLATCACY). Over 225 to 260 (GAMLRHLGRAAVRPAPTDGALQGQLLAQRAGAVRTK) the chain is Cytoplasmic. Residues 261–283 (VSRLVAAVVLLFAACWGPIQLFL) form a helical membrane-spanning segment. Residues 284-305 (VLQALGPSGAWHPRSYAAYAVK) lie on the Extracellular side of the membrane. Residues 306-330 (IWAHCMSYSNSALNPLLYAFLGSHF) traverse the membrane as a helical segment. The Cytoplasmic segment spans residues 331–396 (RQAFCRVCPC…CAQSERTASL (66 aa)). Residues 349–396 (HTSAHSDRAATHTVPHSRAAHPVRIRSPEPGNPVVRSPCAQSERTASL) form a disordered region. Residues 387–396 (CAQSERTASL) are compositionally biased toward polar residues.

Belongs to the G-protein coupled receptor 1 family. As to expression, highest level in the heart and 15- and 17-day embryos. Low level in other tissues. Colocalized with gonadotropin-releasing hormone (GnRH) neurons in the hypothalamus.

Its subcellular location is the cell membrane. Receptor for metastin (kisspeptin-52 or kp-52), a C-terminally amidated peptide of KiSS1. KiSS1 is a metastasis suppressor protein. Activation of the receptor inhibits cell proliferation and cell migration, key characteristics of tumor metastasis. The receptor is essential for normal gonadotropin-released hormone physiology and for puberty. The hypothalamic KiSS1/KISS1R system is a pivotal factor in central regulation of the gonadotropic axis at puberty and in adulthood. Analysis of the transduction pathways activated by the receptor identifies coupling to phospholipase C and intracellular calcium release through pertussis toxin-insensitive G(q) proteins. In Mus musculus (Mouse), this protein is KiSS-1 receptor (Kiss1r).